Here is a 149-residue protein sequence, read N- to C-terminus: Endothelin-1 (149 aa).

Positions Ala1–Ser33 are excised as a propeptide. The interval Val6–Ala26 is disordered. 2 disulfides stabilise this stretch: Cys36–Cys50 and Cys38–Cys46. A propeptide spanning residues Val57 to Lys149 is cleaved from the precursor. The interval Cys93–Cys107 is endothelin-like.

It belongs to the endothelin/sarafotoxin family.

It is found in the secreted. Functionally, endothelins are endothelium-derived vasoconstrictor peptides. Probable ligand for G-protein coupled receptors EDNRA and EDNRB which activates PTK2B, BCAR1, BCAR3 and, GTPases RAP1 and RHOA cascade in glomerular mesangial cells. Also binds the DEAR/FBXW7-AS1 receptor. Promotes mesenteric arterial wall remodeling via activation of ROCK signaling and subsequent colocalization of NFATC3 with F-actin filaments. NFATC3 then translocates to the nucleus where it subsequently promotes the transcription of the smooth muscle hypertrophy and differentiation marker ACTA2. This chain is Endothelin-1 (EDN1), found in Cavia porcellus (Guinea pig).